The primary structure comprises 355 residues: DNA polymerase IV (355 aa).

One can recognise a UmuC domain in the interval 14-198 (IIHVDMDAFF…LPVEKFHGVG (185 aa)). Positions 18 and 116 each coordinate Mg(2+). Glu-117 is a catalytic residue.

Belongs to the DNA polymerase type-Y family. As to quaternary structure, monomer. Mg(2+) serves as cofactor.

The protein resides in the cytoplasm. The enzyme catalyses DNA(n) + a 2'-deoxyribonucleoside 5'-triphosphate = DNA(n+1) + diphosphate. Its function is as follows. Poorly processive, error-prone DNA polymerase involved in untargeted mutagenesis. Copies undamaged DNA at stalled replication forks, which arise in vivo from mismatched or misaligned primer ends. These misaligned primers can be extended by PolIV. Exhibits no 3'-5' exonuclease (proofreading) activity. May be involved in translesional synthesis, in conjunction with the beta clamp from PolIII. This chain is DNA polymerase IV, found in Streptococcus suis (strain 98HAH33).